Consider the following 240-residue polypeptide: NAD(P)H-quinone oxidoreductase subunit K (240 aa).

4 residues coordinate [4Fe-4S] cluster: C55, C56, C120, and C151.

The protein belongs to the complex I 20 kDa subunit family. NDH-1 can be composed of about 15 different subunits; different subcomplexes with different compositions have been identified which probably have different functions. The cofactor is [4Fe-4S] cluster.

It is found in the cellular thylakoid membrane. It catalyses the reaction a plastoquinone + NADH + (n+1) H(+)(in) = a plastoquinol + NAD(+) + n H(+)(out). The enzyme catalyses a plastoquinone + NADPH + (n+1) H(+)(in) = a plastoquinol + NADP(+) + n H(+)(out). Functionally, NDH-1 shuttles electrons from an unknown electron donor, via FMN and iron-sulfur (Fe-S) centers, to quinones in the respiratory and/or the photosynthetic chain. The immediate electron acceptor for the enzyme in this species is believed to be plastoquinone. Couples the redox reaction to proton translocation, and thus conserves the redox energy in a proton gradient. Cyanobacterial NDH-1 also plays a role in inorganic carbon-concentration. This Trichodesmium erythraeum (strain IMS101) protein is NAD(P)H-quinone oxidoreductase subunit K.